We begin with the raw amino-acid sequence, 274 residues long: Putative phosphoenolpyruvate synthase regulatory protein (274 aa).

155 to 162 (GVSRSGKT) is an ADP binding site.

This sequence belongs to the pyruvate, phosphate/water dikinase regulatory protein family. PSRP subfamily.

It carries out the reaction [pyruvate, water dikinase] + ADP = [pyruvate, water dikinase]-phosphate + AMP + H(+). The catalysed reaction is [pyruvate, water dikinase]-phosphate + phosphate + H(+) = [pyruvate, water dikinase] + diphosphate. Functionally, bifunctional serine/threonine kinase and phosphorylase involved in the regulation of the phosphoenolpyruvate synthase (PEPS) by catalyzing its phosphorylation/dephosphorylation. This is Putative phosphoenolpyruvate synthase regulatory protein from Laribacter hongkongensis (strain HLHK9).